Consider the following 207-residue polypeptide: Small ribosomal subunit protein uS4c (207 aa).

Positions 92 to 155 constitute an S4 RNA-binding domain; the sequence is MRLDNILFRL…TYQSILSKRI (64 aa).

This sequence belongs to the universal ribosomal protein uS4 family. As to quaternary structure, part of the 30S ribosomal subunit. Contacts protein S5. The interaction surface between S4 and S5 is involved in control of translational fidelity.

The protein resides in the plastid. Its subcellular location is the chloroplast. Functionally, one of the primary rRNA binding proteins, it binds directly to 16S rRNA where it nucleates assembly of the body of the 30S subunit. With S5 and S12 plays an important role in translational accuracy. The chain is Small ribosomal subunit protein uS4c (rps4) from Equisetum scirpoides (Dwarf-scouring rush).